The chain runs to 841 residues: DNA ligase (841 aa).

NAD(+)-binding positions include 54 to 58 (DAEYD), 103 to 104 (SL), and glutamate 143. The active-site N6-AMP-lysine intermediate is lysine 145. NAD(+)-binding residues include arginine 166, glutamate 203, lysine 321, and lysine 345. Zn(2+)-binding residues include cysteine 471, cysteine 474, cysteine 489, and cysteine 495. Residues 554–575 (KTVAESDQMPSEGSSVGASGKH) are disordered. Polar residues predominate over residues 561-570 (QMPSEGSSVG). In terms of domain architecture, BRCT spans 764-841 (GINKAVAGKT…SEAELLTLLG (78 aa)).

Belongs to the NAD-dependent DNA ligase family. LigA subfamily. Mg(2+) is required as a cofactor. It depends on Mn(2+) as a cofactor.

It catalyses the reaction NAD(+) + (deoxyribonucleotide)n-3'-hydroxyl + 5'-phospho-(deoxyribonucleotide)m = (deoxyribonucleotide)n+m + AMP + beta-nicotinamide D-nucleotide.. Functionally, DNA ligase that catalyzes the formation of phosphodiester linkages between 5'-phosphoryl and 3'-hydroxyl groups in double-stranded DNA using NAD as a coenzyme and as the energy source for the reaction. It is essential for DNA replication and repair of damaged DNA. This is DNA ligase from Neisseria meningitidis serogroup C / serotype 2a (strain ATCC 700532 / DSM 15464 / FAM18).